The sequence spans 98 residues: MAPRKPSKKVGPQKRPSAEKRVITSKKKQLRNQSFKSRVKTTLKKFELAVQSGDVASISAGLSSVYSIADKAVKRGIFKKGKADRVKARASGRACPTA.

Residues 1 to 12 show a composition bias toward basic residues; it reads MAPRKPSKKVGP. Residues 1–34 are disordered; sequence MAPRKPSKKVGPQKRPSAEKRVITSKKKQLRNQS.

Belongs to the bacterial ribosomal protein bS20 family.

In terms of biological role, binds directly to 16S ribosomal RNA. This chain is Small ribosomal subunit protein bS20, found in Chlamydia muridarum (strain MoPn / Nigg).